Here is a 95-residue protein sequence, read N- to C-terminus: Synaptobrevin-A (95 aa).

The Cytoplasmic segment spans residues 1-70 (MSEPVNKVKQ…KRLMWCRNIK (70 aa)). One can recognise a v-SNARE coiled-coil homology domain in the interval 7-67 (KVKQTQQQVD…NEIKRLMWCR (61 aa)). A helical; Anchor for type IV membrane protein transmembrane segment spans residues 71–91 (LTLIIIAVVVLLLVVIIVPIV). Residues 92-95 (LKFT) lie on the Vesicular side of the membrane.

It belongs to the synaptobrevin family.

It is found in the cytoplasmic vesicle. The protein localises to the secretory vesicle membrane. Its function is as follows. Involved in the targeting and/or fusion of transport vesicles to their target membrane. This Dictyostelium discoideum (Social amoeba) protein is Synaptobrevin-A (sybA).